Reading from the N-terminus, the 418-residue chain is Putative ion-transport protein YfeO (418 aa).

A run of 12 helical transmembrane segments spans residues Leu-10–Val-30, Asp-54–Ile-74, Ala-99–Pro-119, Glu-120–Pro-140, Ile-149–Ile-169, Leu-186–Pro-206, Ile-223–Cys-243, Val-258–Val-278, Asp-300–Phe-320, Gly-322–His-342, Val-343–Val-363, and Leu-371–Met-391.

Belongs to the chloride channel (TC 2.A.49) family.

The protein localises to the cell membrane. The polypeptide is Putative ion-transport protein YfeO (Shigella sonnei (strain Ss046)).